The chain runs to 212 residues: Thymidylate kinase (212 aa).

Glycine 11–serine 18 contacts ATP.

This sequence belongs to the thymidylate kinase family.

The enzyme catalyses dTMP + ATP = dTDP + ADP. Functionally, phosphorylation of dTMP to form dTDP in both de novo and salvage pathways of dTTP synthesis. The protein is Thymidylate kinase of Chromohalobacter salexigens (strain ATCC BAA-138 / DSM 3043 / CIP 106854 / NCIMB 13768 / 1H11).